Here is a 250-residue protein sequence, read N- to C-terminus: Hydroxyacylglutathione hydrolase (250 aa).

Zn(2+)-binding residues include His-53, His-55, Asp-57, His-58, His-111, Asp-128, and His-166.

This sequence belongs to the metallo-beta-lactamase superfamily. Glyoxalase II family. Monomer. Zn(2+) serves as cofactor.

It catalyses the reaction an S-(2-hydroxyacyl)glutathione + H2O = a 2-hydroxy carboxylate + glutathione + H(+). Its pathway is secondary metabolite metabolism; methylglyoxal degradation; (R)-lactate from methylglyoxal: step 2/2. Thiolesterase that catalyzes the hydrolysis of S-D-lactoyl-glutathione to form glutathione and D-lactic acid. This chain is Hydroxyacylglutathione hydrolase, found in Methylobacillus flagellatus (strain ATCC 51484 / DSM 6875 / VKM B-1610 / KT).